Reading from the N-terminus, the 688-residue chain is Protein sel-1 homolog 2 (688 aa).

A signal peptide spans 1-18 (MNPLALLVEILIIIEVTT). The Extracellular portion of the chain corresponds to 19-662 (KNSEAERYNR…KWKWLKLDST (644 aa)). N-linked (GlcNAc...) asparagine glycosylation occurs at asparagine 34. Sel1-like repeat units lie at residues 107 to 142 (GDEL…DMGN), 143 to 178 (LKAM…KEGS), 179 to 214 (YKAQ…AGGS), 215 to 250 (MMSQ…DYIA), 297 to 333 (VQIQ…KAGS), 334 to 370 (ANAM…SKGN), 371 to 406 (AIGL…EKGW), 407 to 442 (PNAQ…QSGQ), 443 to 478 (PLAI…ELGH), 551 to 586 (AFAR…DKHH), and 588 to 623 (AQAM…QTSP). Asparagine 162 carries an N-linked (GlcNAc...) asparagine glycan. Residues 663 to 683 (IGPYWDLLVIGLIVVVLIFLL) form a helical membrane-spanning segment. The Cytoplasmic portion of the chain corresponds to 684 to 688 (RNHHR).

Belongs to the sel-1 family.

The protein localises to the membrane. The protein resides in the cell projection. Its subcellular location is the cilium. It is found in the nucleus speckle. The protein is Protein sel-1 homolog 2 (Sel1l2) of Rattus norvegicus (Rat).